Reading from the N-terminus, the 595-residue chain is Aspartate--tRNA(Asp/Asn) ligase (595 aa).

An L-aspartate-binding site is contributed by Glu-175. Positions 199 to 202 (QQFK) are aspartate. The L-aspartate site is built by Arg-221 and His-451. 221–223 (RDE) is an ATP binding site. Glu-485 contributes to the ATP binding site. Arg-492 lines the L-aspartate pocket. ATP is bound at residue 537–540 (GVDR).

The protein belongs to the class-II aminoacyl-tRNA synthetase family. Type 1 subfamily. In terms of assembly, homodimer.

It is found in the cytoplasm. The enzyme catalyses tRNA(Asx) + L-aspartate + ATP = L-aspartyl-tRNA(Asx) + AMP + diphosphate. Aspartyl-tRNA synthetase with relaxed tRNA specificity since it is able to aspartylate not only its cognate tRNA(Asp) but also tRNA(Asn). Reaction proceeds in two steps: L-aspartate is first activated by ATP to form Asp-AMP and then transferred to the acceptor end of tRNA(Asp/Asn). The protein is Aspartate--tRNA(Asp/Asn) ligase of Acidiphilium cryptum (strain JF-5).